We begin with the raw amino-acid sequence, 45 residues long: Large ribosomal subunit protein bL34 (45 aa).

The segment at 1-45 is disordered; sequence MTKRTFGGTSRKRKRVSGFRVRMRSHTGRRVIKSRRQKGRERIAV. A compositionally biased stretch (basic residues) spans 10 to 39; sequence SRKRKRVSGFRVRMRSHTGRRVIKSRRQKG.

Belongs to the bacterial ribosomal protein bL34 family.

This is Large ribosomal subunit protein bL34 from Prochlorococcus marinus (strain MIT 9301).